The chain runs to 905 residues: Heme/hemopexin-binding protein (905 aa).

The first 21 residues, 1–21 (MYKLNVISLIILTTYTGATYA), serve as a signal peptide directing secretion.

It localises to the secreted. In terms of biological role, binds heme/hemopexin complexes. This chain is Heme/hemopexin-binding protein (hxuA), found in Haemophilus influenzae (strain ATCC 51907 / DSM 11121 / KW20 / Rd).